The following is a 230-amino-acid chain: Urease accessory protein UreF (230 aa).

It belongs to the UreF family. As to quaternary structure, ureD, UreF and UreG form a complex that acts as a GTP-hydrolysis-dependent molecular chaperone, activating the urease apoprotein by helping to assemble the nickel containing metallocenter of UreC. The UreE protein probably delivers the nickel.

The protein resides in the cytoplasm. Functionally, required for maturation of urease via the functional incorporation of the urease nickel metallocenter. This chain is Urease accessory protein UreF, found in Cupriavidus taiwanensis (strain DSM 17343 / BCRC 17206 / CCUG 44338 / CIP 107171 / LMG 19424 / R1) (Ralstonia taiwanensis (strain LMG 19424)).